A 745-amino-acid chain; its full sequence is Inhibitor of nuclear factor kappa-B kinase subunit alpha (745 aa).

Positions 15-300 (WEMRERLGTG…IDLTLKQPRC (286 aa)) constitute a Protein kinase domain. Residues 21 to 29 (LGTGGFGNV) and Lys44 contribute to the ATP site. Thr23 carries the post-translational modification Phosphothreonine; by PKB/AKT1 and SGK1. Asp144 functions as the Proton acceptor in the catalytic mechanism. Ser176 is modified (phosphoserine; by MAP3K14). A Phosphoserine; by SGK1 modification is found at Ser180. Residues 455 to 476 (LLRYNANLTKMKNTLISASQQL) form a leucine-zipper region. An NEMO-binding region spans residues 738–743 (LDWSWL).

Belongs to the protein kinase superfamily. Ser/Thr protein kinase family. I-kappa-B kinase subfamily. As to quaternary structure, component of the I-kappa-B-kinase (IKK) core complex consisting of CHUK, IKBKB and IKBKG; probably four alpha/CHUK-beta/IKBKB dimers are associated with four gamma/IKBKG subunits. The IKK core complex seems to associate with regulatory or adapter proteins to form a IKK-signalosome holo-complex. The IKK complex associates with TERF2IP/RAP1, leading to promote IKK-mediated phosphorylation of RELA/p65. Part of a complex composed of NCOA2, NCOA3, CHUK/IKKA, IKBKB, IKBKG and CREBBP. Part of a 70-90 kDa complex at least consisting of CHUK/IKKA, IKBKB, NFKBIA, RELA, ELP1 and MAP3K14. Directly interacts with TRPC4AP. May interact with TRAF2. Interacts with NALP2. May interact with MAVS/IPS1. Interacts with ARRB1 and ARRB2. Interacts with NLRC5; prevents CHUK phosphorylation and kinase activity. Interacts with PIAS1; this interaction induces PIAS1 phosphorylation. Interacts with ZNF268 isoform 2; the interaction is further increased in a TNF-alpha-dependent manner. Interacts with LRRC14. Interacts with SASH1. Directly interacts with DDX3X after the physiological activation of the TLR7 and TLR8 pathways; this interaction enhances CHUK autophosphorylation. Ubiquitinated by TRIM56 via 'Lys-63'-linked ubiquitination, promoting activation of CHUK/IKKA. Post-translationally, phosphorylated by MAP3K14/NIK, AKT and to a lesser extent by MEKK1, and dephosphorylated by PP2A. Autophosphorylated. In terms of tissue distribution, ubiquitous only for isoform 1, isoforms 2 and 3 are expressed predominantly in brain and T-lymphocytes.

Its subcellular location is the cytoplasm. It localises to the nucleus. The catalysed reaction is L-seryl-[I-kappa-B protein] + ATP = O-phospho-L-seryl-[I-kappa-B protein] + ADP + H(+). Its activity is regulated as follows. Activated when phosphorylated and inactivated when dephosphorylated. Functionally, serine kinase that plays an essential role in the NF-kappa-B signaling pathway which is activated by multiple stimuli such as inflammatory cytokines, bacterial or viral products, DNA damages or other cellular stresses. Acts as a part of the canonical IKK complex in the conventional pathway of NF-kappa-B activation and phosphorylates inhibitors of NF-kappa-B on serine residues. These modifications allow polyubiquitination of the inhibitors and subsequent degradation by the proteasome. In turn, free NF-kappa-B is translocated into the nucleus and activates the transcription of hundreds of genes involved in immune response, growth control, or protection against apoptosis. Negatively regulates the pathway by phosphorylating the scaffold protein TAXBP1 and thus promoting the assembly of the A20/TNFAIP3 ubiquitin-editing complex (composed of A20/TNFAIP3, TAX1BP1, and the E3 ligases ITCH and RNF11). Therefore, CHUK plays a key role in the negative feedback of NF-kappa-B canonical signaling to limit inflammatory gene activation. As part of the non-canonical pathway of NF-kappa-B activation, the MAP3K14-activated CHUK/IKKA homodimer phosphorylates NFKB2/p100 associated with RelB, inducing its proteolytic processing to NFKB2/p52 and the formation of NF-kappa-B RelB-p52 complexes. In turn, these complexes regulate genes encoding molecules involved in B-cell survival and lymphoid organogenesis. Also participates in the negative feedback of the non-canonical NF-kappa-B signaling pathway by phosphorylating and destabilizing MAP3K14/NIK. Within the nucleus, phosphorylates CREBBP and consequently increases both its transcriptional and histone acetyltransferase activities. Modulates chromatin accessibility at NF-kappa-B-responsive promoters by phosphorylating histones H3 at 'Ser-10' that are subsequently acetylated at 'Lys-14' by CREBBP. Additionally, phosphorylates the CREBBP-interacting protein NCOA3. Also phosphorylates FOXO3 and may regulate this pro-apoptotic transcription factor. Phosphorylates RIPK1 at 'Ser-25' which represses its kinase activity and consequently prevents TNF-mediated RIPK1-dependent cell death. Phosphorylates AMBRA1 following mitophagy induction, promoting AMBRA1 interaction with ATG8 family proteins and its mitophagic activity. The chain is Inhibitor of nuclear factor kappa-B kinase subunit alpha (Chuk) from Mus musculus (Mouse).